The sequence spans 257 residues: 1-(5-phosphoribosyl)-5-[(5-phosphoribosylamino)methylideneamino] imidazole-4-carboxamide isomerase (257 aa).

The active-site Proton acceptor is Asp-8. Asp-129 acts as the Proton donor in catalysis.

Belongs to the HisA/HisF family.

It localises to the cytoplasm. It carries out the reaction 1-(5-phospho-beta-D-ribosyl)-5-[(5-phospho-beta-D-ribosylamino)methylideneamino]imidazole-4-carboxamide = 5-[(5-phospho-1-deoxy-D-ribulos-1-ylimino)methylamino]-1-(5-phospho-beta-D-ribosyl)imidazole-4-carboxamide. It participates in amino-acid biosynthesis; L-histidine biosynthesis; L-histidine from 5-phospho-alpha-D-ribose 1-diphosphate: step 4/9. In Crocosphaera subtropica (strain ATCC 51142 / BH68) (Cyanothece sp. (strain ATCC 51142)), this protein is 1-(5-phosphoribosyl)-5-[(5-phosphoribosylamino)methylideneamino] imidazole-4-carboxamide isomerase.